A 158-amino-acid polypeptide reads, in one-letter code: Placenta growth factor (158 aa).

The or 26 signal peptide spans 1 to 23 (MLAMKLFTCFLQVLAGLAVHSQG). N-linked (GlcNAc...) asparagine glycosylation is found at Asn29 and Asn30. Cystine bridges form between Cys48-Cys90, Cys79-Cys125, and Cys83-Cys127. N-linked (GlcNAc...) asparagine glycosylation is present at Asn97. Residues 136–158 (AERRKTKGKRKQSKTPQTEEPHL) form a disordered region. Positions 137 to 148 (ERRKTKGKRKQS) are enriched in basic residues.

The protein belongs to the PDGF/VEGF growth factor family. In terms of assembly, antiparallel homodimer; disulfide-linked. Also found as heterodimer with VEGFA/VEGF.

The protein resides in the secreted. Its function is as follows. Growth factor active in angiogenesis and endothelial cell growth, stimulating their proliferation and migration. It binds to the receptor FLT1/VEGFR-1. Also promotes cell tumor growth. The protein is Placenta growth factor (Pgf) of Rattus norvegicus (Rat).